Here is a 434-residue protein sequence, read N- to C-terminus: Glutamate-1-semialdehyde 2,1-aminomutase (434 aa).

Lys-270 is modified (N6-(pyridoxal phosphate)lysine).

It belongs to the class-III pyridoxal-phosphate-dependent aminotransferase family. HemL subfamily. As to quaternary structure, homodimer. It depends on pyridoxal 5'-phosphate as a cofactor.

Its subcellular location is the cytoplasm. The catalysed reaction is (S)-4-amino-5-oxopentanoate = 5-aminolevulinate. Its pathway is porphyrin-containing compound metabolism; protoporphyrin-IX biosynthesis; 5-aminolevulinate from L-glutamyl-tRNA(Glu): step 2/2. The sequence is that of Glutamate-1-semialdehyde 2,1-aminomutase from Pelotomaculum thermopropionicum (strain DSM 13744 / JCM 10971 / SI).